Here is a 175-residue protein sequence, read N- to C-terminus: Ribulose bisphosphate carboxylase small subunit, chloroplastic (175 aa).

A chloroplast-targeting transit peptide spans 1 to 46 (MAPSVMASSATTVAPFQGLKSTAGMPVARRSGNSSFGNVSNGGRIR). Residues 60–64 (ETLSY) form an interaction with large subunit region.

Belongs to the RuBisCO small chain family. As to quaternary structure, heterohexadecamer of 8 large and 8 small subunits.

Its subcellular location is the plastid. The protein localises to the chloroplast. In terms of biological role, ruBisCO catalyzes two reactions: the carboxylation of D-ribulose 1,5-bisphosphate, the primary event in carbon dioxide fixation, as well as the oxidative fragmentation of the pentose substrate. Both reactions occur simultaneously and in competition at the same active site. Although the small subunit is not catalytic it is essential for maximal activity. In Oryza sativa subsp. indica (Rice), this protein is Ribulose bisphosphate carboxylase small subunit, chloroplastic.